A 656-amino-acid chain; its full sequence is Spermatogenesis-associated protein 13 (656 aa).

Over residues 1–12 the composition is skewed to polar residues; the sequence is MHPASVTTTSQD. Positions 1-26 are disordered; sequence MHPASVTTTSQDPCAPSGSCRGGRRR. Ser-82 is subject to Phosphoserine. The tract at residues 85–115 is disordered; it reads IGLDRVGRRRQMKTSNVSSDGGAESSALVDD. The interval 102 to 154 is ABR (APC-binding region) domain; that stretch reads SSDGGAESSALVDDNGSEEDFSYEELCQANPRYLQPGGEQLAINELISDGSVV. At Ser-118 the chain carries Phosphoserine. An SH3 domain is found at 151–210; sequence GSVVCAEALWDHVTMDDQELGFKAGDVIQVLEASNKDWWWGRNEDKEAWFPASFVRLRVN. The segment at 215-242 is disordered; it reads PENCSSSHGEEQDEDTSKARHKHPESQQ. The DH domain maps to 244–428; that stretch reads MRTNVIQEIM…KNVACLINER (185 aa). Residues 459-565 form the PH domain; it reads ELIHSGELTK…WLQAYADERR (107 aa). A C-terminal tail region spans residues 565–656; it reads RRVQEDQQMG…TFHKLTPFRK (92 aa).

In terms of assembly, interacts (via ABR and SH3 domain) with APC. The binding of APC enhances its GEF activity by relieving it from an autoinhibitory conformation, in which the ABR and SH3 domains are associated with the C-terminal tail. Interacts (via C-terminal tail) with PPP1R9B (via C-terminus). Interacts with RAC1. In terms of tissue distribution, expression is aberrantly enhanced in most colorectal tumors.

Its subcellular location is the cytoplasm. It localises to the cell projection. The protein localises to the filopodium. The protein resides in the lamellipodium. It is found in the ruffle membrane. Its subcellular location is the podosome. Its activity is regulated as follows. Both the ABR and the SH3 domains contribute to maintaining the protein in an inhibited conformation by associating with the C-terminal tail. Binding of these domains to the C-terminal tail inhibits the activity of the protein by blocking a region that is required for its GEF activity. In terms of biological role, acts as a guanine nucleotide exchange factor (GEF) for RHOA, RAC1 and CDC42 GTPases. Regulates cell migration and adhesion assembly and disassembly through a RAC1, PI3K, RHOA and AKT1-dependent mechanism. Increases both RAC1 and CDC42 activity, but decreases the amount of active RHOA. Required for MMP9 up-regulation via the JNK signaling pathway in colorectal tumor cells. Involved in tumor angiogenesis and may play a role in intestinal adenoma formation and tumor progression. The chain is Spermatogenesis-associated protein 13 (Spata13) from Mus musculus (Mouse).